Reading from the N-terminus, the 690-residue chain is Glycine--tRNA ligase 1, mitochondrial (690 aa).

A mitochondrion-targeting transit peptide spans 1–24 (MSFFNISRRFYSQIVKKSVKIKRM). S25 is modified (N-acetylserine). Phosphoserine is present on S226. E251 contributes to the glycine binding site. ATP-binding positions include 283-285 (RNE) and 294-295 (RV). Residue E302 participates in glycine binding. 410 to 411 (EC) serves as a coordination point for ATP. Residues S476 and S528 each carry the phosphoserine modification. Position 531-533 (531-533 (EPS)) interacts with glycine. R538 contributes to the ATP binding site. At T689 the chain carries Phosphothreonine.

This sequence belongs to the class-II aminoacyl-tRNA synthetase family. Homodimer.

It is found in the cytoplasm. Its subcellular location is the mitochondrion matrix. It carries out the reaction tRNA(Gly) + glycine + ATP = glycyl-tRNA(Gly) + AMP + diphosphate. The enzyme catalyses 2 ATP + H(+) = P(1),P(4)-bis(5'-adenosyl) tetraphosphate + diphosphate. In terms of biological role, catalyzes the ATP-dependent ligation of glycine to the 3'-end of its cognate tRNA, via the formation of an aminoacyl-adenylate intermediate (Gly-AMP). Also produces diadenosine tetraphosphate (Ap4A), a universal pleiotropic signaling molecule needed for cell regulation pathways, by direct condensation of 2 ATPs. Thereby, may play a special role in Ap4A homeostasis. This is Glycine--tRNA ligase 1, mitochondrial (GRS1) from Saccharomyces cerevisiae (strain ATCC 204508 / S288c) (Baker's yeast).